We begin with the raw amino-acid sequence, 275 residues long: NADH-quinone oxidoreductase subunit E 1 (275 aa).

4 residues coordinate [2Fe-2S] cluster: Cys99, Cys104, Cys140, and Cys144. Residues 200–275 (LQAPEPVEEK…DKSKPAKKPR (76 aa)) are disordered. Positions 206–221 (VEEKKSVRASKAKDEQ) are enriched in basic and acidic residues. A compositionally biased stretch (polar residues) spans 231-242 (AKPSTATDVTNP). The span at 243–256 (TLKTPATARKAAAK) shows a compositional bias: low complexity. Residues 258–269 (VKIEGETVDKSK) are compositionally biased toward basic and acidic residues.

The protein belongs to the complex I 24 kDa subunit family. It depends on [2Fe-2S] cluster as a cofactor.

It catalyses the reaction a quinone + NADH + 5 H(+)(in) = a quinol + NAD(+) + 4 H(+)(out). In terms of biological role, NDH-1 shuttles electrons from NADH, via FMN and iron-sulfur (Fe-S) centers, to quinones in the respiratory chain. The immediate electron acceptor for the enzyme in this species is believed to be ubiquinone. Couples the redox reaction to proton translocation (for every two electrons transferred, four hydrogen ions are translocated across the cytoplasmic membrane), and thus conserves the redox energy in a proton gradient. This is NADH-quinone oxidoreductase subunit E 1 (nuoE1) from Rhizobium meliloti (strain 1021) (Ensifer meliloti).